The chain runs to 99 residues: MKTQVTKARLEAKVNIDIYELLKQAAAITGRTLTDFVVSVAYEEAKKTISEHQVLRLAVNDQALLIESLSKPFEPNPSMKNALDVYEAYLSITGKNNDK.

It belongs to the TacA antitoxin family.

Functionally, putative antitoxin component of a toxin-antitoxin (TA) system; its cognate toxin (usually a tRNA acetylase) is unknown. The polypeptide is Orphan antixoxin protein TacA (Haemophilus influenzae (strain ATCC 51907 / DSM 11121 / KW20 / Rd)).